Here is a 617-residue protein sequence, read N- to C-terminus: V-type proton ATPase catalytic subunit A (617 aa).

ATP is bound at residue 257–264; it reads GAFGCGKT.

This sequence belongs to the ATPase alpha/beta chains family. As to quaternary structure, V-ATPase is a heteromultimeric enzyme composed of a peripheral catalytic V1 complex (components A to H) attached to an integral membrane V0 proton pore complex (components: a, c, c', c'', d, e, f and VOA1).

The protein resides in the vacuole membrane. The catalysed reaction is ATP + H2O + 4 H(+)(in) = ADP + phosphate + 5 H(+)(out). Its function is as follows. Catalytic subunit of the V1 complex of vacuolar(H+)-ATPase (V-ATPase), a multisubunit enzyme composed of a peripheral complex (V1) that hydrolyzes ATP and a membrane integral complex (V0) that translocates protons. V-ATPase is responsible for acidifying and maintaining the pH of intracellular compartments. This chain is V-type proton ATPase catalytic subunit A (VMA1), found in Eremothecium gossypii (strain ATCC 10895 / CBS 109.51 / FGSC 9923 / NRRL Y-1056) (Yeast).